The sequence spans 81 residues: Small ribosomal subunit protein bS16 (81 aa).

It belongs to the bacterial ribosomal protein bS16 family.

This Alkaliphilus oremlandii (strain OhILAs) (Clostridium oremlandii (strain OhILAs)) protein is Small ribosomal subunit protein bS16.